The chain runs to 344 residues: Dihydroorotase (344 aa).

Zn(2+) contacts are provided by histidine 13 and histidine 15. Residues 15–17 (HLR) and asparagine 41 each bind substrate. Zn(2+) is bound by residues lysine 98, histidine 135, and histidine 173. N6-carboxylysine is present on lysine 98. Histidine 135 is a binding site for substrate. Leucine 218 provides a ligand contact to substrate. Aspartate 247 serves as a coordination point for Zn(2+). Aspartate 247 is an active-site residue. Positions 251 and 263 each coordinate substrate.

Belongs to the metallo-dependent hydrolases superfamily. DHOase family. Class II DHOase subfamily. As to quaternary structure, homodimer. Zn(2+) is required as a cofactor.

The catalysed reaction is (S)-dihydroorotate + H2O = N-carbamoyl-L-aspartate + H(+). The protein operates within pyrimidine metabolism; UMP biosynthesis via de novo pathway; (S)-dihydroorotate from bicarbonate: step 3/3. Functionally, catalyzes the reversible cyclization of carbamoyl aspartate to dihydroorotate. This chain is Dihydroorotase, found in Neisseria gonorrhoeae (strain ATCC 700825 / FA 1090).